A 308-amino-acid polypeptide reads, in one-letter code: Tetraacyldisaccharide 4'-kinase (308 aa).

An ATP-binding site is contributed by 63–70; sequence SFGGNGKT.

The protein belongs to the LpxK family.

The catalysed reaction is a lipid A disaccharide + ATP = a lipid IVA + ADP + H(+). It participates in glycolipid biosynthesis; lipid IV(A) biosynthesis; lipid IV(A) from (3R)-3-hydroxytetradecanoyl-[acyl-carrier-protein] and UDP-N-acetyl-alpha-D-glucosamine: step 6/6. Its function is as follows. Transfers the gamma-phosphate of ATP to the 4'-position of a tetraacyldisaccharide 1-phosphate intermediate (termed DS-1-P) to form tetraacyldisaccharide 1,4'-bis-phosphate (lipid IVA). The protein is Tetraacyldisaccharide 4'-kinase of Campylobacter jejuni subsp. jejuni serotype O:2 (strain ATCC 700819 / NCTC 11168).